We begin with the raw amino-acid sequence, 339 residues long: Erlin-2 (339 aa).

The Cytoplasmic portion of the chain corresponds to 1–3 (MAQ). A helical transmembrane segment spans residues 4-24 (LGAVVAVASSFFCASLFSAVH). Topologically, residues 25–339 (KIEEGHIGVY…EPLETATKEN (315 aa)) are lumenal. An N-linked (GlcNAc...) asparagine glycan is attached at Asn106. The tract at residues 177–309 (EAIRRNYELM…DIPNMFMDSA (133 aa)) is interaction with ERLIN1. At Lys267 the chain carries N6-acetyllysine.

The protein belongs to the band 7/mec-2 family. Forms a heteromeric complex with ERLIN1. In complex with ERLIN1, interacts with RNF170. Interacts with activated ITPR1, independently of the degree of ITPR1 polyubiquitination. Interacts with SCAP, INSIG1, SREBF1 and SREBF2 under cholesterol sufficiency conditions; indicative for an association with the SCAP-SREBP-INSIG complex. Probably part of an AMFR/gp78 and INSIG1-containing ubiquitin ligase complex involved in ERAD of HMGCR. Interacts with TMUB1; TMUB1 bridges the association with AMFR. Interacts with SYVN1 and RNF139. Interacts with TMEM259. Interacts with TMEM41B. In terms of processing, deubiquitinated by USP25; leading to stabilization. As to expression, ubiquitous.

It is found in the endoplasmic reticulum membrane. In terms of biological role, component of the ERLIN1/ERLIN2 complex which mediates the endoplasmic reticulum-associated degradation (ERAD) of inositol 1,4,5-trisphosphate receptors (IP3Rs) such as ITPR1. Promotes sterol-accelerated ERAD of HMGCR probably implicating an AMFR/gp78-containing ubiquitin ligase complex. Involved in regulation of cellular cholesterol homeostasis by regulation the SREBP signaling pathway. May promote ER retention of the SCAP-SREBF complex. This is Erlin-2 (ERLIN2) from Homo sapiens (Human).